The chain runs to 122 residues: Large ribosomal subunit protein uL14 (122 aa).

Belongs to the universal ribosomal protein uL14 family. Part of the 50S ribosomal subunit. Forms a cluster with proteins L3 and L19. In the 70S ribosome, L14 and L19 interact and together make contacts with the 16S rRNA in bridges B5 and B8.

In terms of biological role, binds to 23S rRNA. Forms part of two intersubunit bridges in the 70S ribosome. The sequence is that of Large ribosomal subunit protein uL14 from Frankia alni (strain DSM 45986 / CECT 9034 / ACN14a).